The primary structure comprises 182 residues: CASP-like protein 5A1 (182 aa).

Residues 1-47 (MEMASHPAVHPVALPPPYQAVGPPAPPAVRINDFPGSPGTLMGLALR) lie on the Cytoplasmic side of the membrane. The chain crosses the membrane as a helical span at residues 48–68 (FAQLGFALTALCIMVSIVGFS). The Extracellular portion of the chain corresponds to 69–72 (SVTA). The chain crosses the membrane as a helical span at residues 73–93 (FCFLVAAMVLQCIWSLCLGVL). The Cytoplasmic segment spans residues 94-117 (DCYALLTKRSLRNSLILSFFVVGD). The helical transmembrane segment at 118-138 (WITSTMTFAGACAAAGITVLI) threads the bilayer. Residues 139–158 (DNDLNQCGPNHCNRFEAAAA) are Extracellular-facing. The helical transmembrane segment at 159–179 (MAFMSWVITTISFFLSFWILV) threads the bilayer. Residues 180–182 (TCR) lie on the Cytoplasmic side of the membrane.

The protein belongs to the Casparian strip membrane proteins (CASP) family. As to quaternary structure, homodimer and heterodimers.

Its subcellular location is the cell membrane. The sequence is that of CASP-like protein 5A1 from Physcomitrium patens (Spreading-leaved earth moss).